The chain runs to 446 residues: MRYRSMTVTLQPADLLARLQSRHPLLWLNPHAGSPLPHDAPGPGAIATAEARLARCEPLMAELFPELATSAGKIESPLMPADNLQRTLSLPADTHGAWFIKRDDALPIAGSIKARGGFHEVLALAESIAIEHGLLEPAGDRRILASAAARERFAAHTVIVGSTGNLGLSIGVMASALGFESVVHMSTDAKPWKKARLRQRGVRVIEHDGDYAQAVAAGRAQARNQPRSHFVDDEGSLMLFLGYAASARHLAAQLAEAGRRVDATHPLFVHIPCGVGGAPGGIAHGLKALFGEHVHCFFAEPVASPCMLVQLAAGLGKPVSVYDVGLDNRTEADGLAVAQASHLVSPLMASLLSGVFTVSDAQLYAQLLAVQHATGVELEPSAAAAVGGPGWLTRSPAGRDYVHRHAIDLRQSTHVIWATGGSLVPPEEHRRFQSHAKALAGAAAGT.

The residue at position 113 (lysine 113) is an N6-(pyridoxal phosphate)lysine.

The protein belongs to the serine/threonine dehydratase family. DsdA subfamily. The cofactor is pyridoxal 5'-phosphate.

It carries out the reaction D-serine = pyruvate + NH4(+). The polypeptide is Probable D-serine dehydratase (Burkholderia lata (strain ATCC 17760 / DSM 23089 / LMG 22485 / NCIMB 9086 / R18194 / 383)).